We begin with the raw amino-acid sequence, 402 residues long: Phosphoglycerate kinase (402 aa).

Substrate is bound by residues 24-26 (DFN), arginine 41, 64-67 (HMGR), arginine 123, and arginine 156. ATP is bound by residues lysine 207, glycine 298, glutamate 329, and 358–361 (GGDS).

Belongs to the phosphoglycerate kinase family. Monomer.

It localises to the cytoplasm. It carries out the reaction (2R)-3-phosphoglycerate + ATP = (2R)-3-phospho-glyceroyl phosphate + ADP. It participates in carbohydrate degradation; glycolysis; pyruvate from D-glyceraldehyde 3-phosphate: step 2/5. The sequence is that of Phosphoglycerate kinase from Microcystis aeruginosa (strain NIES-843 / IAM M-2473).